The primary structure comprises 315 residues: Ornithine carbamoyltransferase (315 aa).

Carbamoyl phosphate contacts are provided by residues 53-56 (STRT), Gln80, Arg104, and 131-134 (HPCQ). L-ornithine-binding positions include Asn163, Asp227, and 231-232 (SM). Carbamoyl phosphate-binding positions include 267 to 268 (CL) and Arg295.

Belongs to the aspartate/ornithine carbamoyltransferase superfamily. OTCase family.

The protein localises to the cytoplasm. The enzyme catalyses carbamoyl phosphate + L-ornithine = L-citrulline + phosphate + H(+). It participates in amino-acid biosynthesis; L-arginine biosynthesis; L-arginine from L-ornithine and carbamoyl phosphate: step 1/3. Reversibly catalyzes the transfer of the carbamoyl group from carbamoyl phosphate (CP) to the N(epsilon) atom of ornithine (ORN) to produce L-citrulline. The sequence is that of Ornithine carbamoyltransferase from Rhodococcus jostii (strain RHA1).